A 118-amino-acid polypeptide reads, in one-letter code: Large ribosomal subunit protein bL20 (118 aa).

It belongs to the bacterial ribosomal protein bL20 family.

Functionally, binds directly to 23S ribosomal RNA and is necessary for the in vitro assembly process of the 50S ribosomal subunit. It is not involved in the protein synthesizing functions of that subunit. This Pseudomonas fluorescens (strain ATCC BAA-477 / NRRL B-23932 / Pf-5) protein is Large ribosomal subunit protein bL20.